We begin with the raw amino-acid sequence, 264 residues long: Short chain dehydrogenase/reductase dmxR18 (264 aa).

Residues I24, D70, N97, and R130 each coordinate NADP(+). Active-site proton donor residues include S146 and S147. 3 residues coordinate NADP(+): Y161, K165, and T196. Catalysis depends on Y161, which acts as the Proton acceptor. K165 (lowers pKa of active site Tyr) is an active-site residue.

It belongs to the short-chain dehydrogenases/reductases (SDR) family.

It carries out the reaction 3,8,9,10-tetrahydroxy-6-methyl-1,4-dihydroanthracen-1-one + NADPH + H(+) = (3R)-3,8,9,10-tetrahydroxy-6-methyl-1,2,3,4-tetrahydroanthracen-1-one + NADP(+). Its pathway is secondary metabolite biosynthesis. Functionally, short chain dehydrogenase/reductase; part of the gene cluster that mediates the biosynthesis of the dimeric xanthones cryptosporioptides. The pathway begins with the synthesis of atrochrysone thioester by the polyketide synthase dmx-nrPKS. The atrochrysone carboxyl ACP thioesterase dmxR1 then breaks the thioester bond and releases the atrochrysone carboxylic acid from dmx-nrPKS. Atrochrysone carboxylic acid is decarboxylated by the decarboxylase dmxR15, and oxidized by the anthrone oxygenase dmxR16 to yield emodin. Emodin is then reduced to emodin hydroquinone by the oxidoreductase dmxR7. A-ring reduction by the short chain dehydrogenase dmxR18, dehydration by the scytalone dehydratase-like protein dmxR17 and probable spontaneous re-oxidation, results in overall deoxygenation to chrysophanol. Baeyer-Villiger oxidation by the Baeyer-Villiger monooxygenase (BVMO) dmxR6 then yields monodictylactone in equilibrium with monodictyphenone. In the case of the cryptosporioptides biosynthesis, monodictylactone is reduced at C-12 to an alcohol (by the short chain dehydrogenases dmxR12 or dmxR8) and hydroxylated at C-5 by dmxR9, yielding the electron-rich aromatic which could eliminate H(2)O to form the ortho-quinonemethide, followed by tautomerisation to paraquinone and complete the formal reduction to produce the 10-methylgroup. Conjugate addition of C-4a-OH to the resulting paraquinone by the monooxygenase dmxR10 then gives cyclohexadienone, which is then reduced at C-5 by the short chain dehydrogenase dmxR3 to give the dihydroxanthone. The 6,7-epoxide in the cryptosporioptides could be introduced by the cytochrome P450 monooxygenase dmxL3. The highly reducing PKS dmxL2 manufactures butyrate, which is further carboxylated by dmxL1 to form ethylmalonate. It is not yet clear whether the carboxylation occurs while the butyrate is attached to the ACP of dmxL2, but this unusual fungal metabolite could then be esterified to O-5 by the O-acetyltransferase dmxR13. Finally, dimerization performed by dmxR5 gives the observed dimers cryptosporioptides A, B and C as the final products of the pathway. The protein is Short chain dehydrogenase/reductase dmxR18 of Cryptosporiopsis sp. (strain 8999).